The chain runs to 469 residues: Secreted triacylglycerol lipase LIP3 (469 aa).

The first 21 residues, 1–21 (MVSLLWKFTLLCLFLLACTSA), serve as a signal peptide directing secretion. Cysteine 121 and cysteine 292 are oxidised to a cystine. Catalysis depends on serine 205, which acts as the Nucleophile. Asparagine 238 carries an N-linked (GlcNAc...) asparagine glycan. Residues aspartate 352 and histidine 386 contribute to the active site.

It belongs to the AB hydrolase superfamily. Lipase family. Class Lip subfamily.

It localises to the secreted. The catalysed reaction is a triacylglycerol + H2O = a diacylglycerol + a fatty acid + H(+). It catalyses the reaction a monoacylglycerol + H2O = glycerol + a fatty acid + H(+). It carries out the reaction a diacylglycerol + H2O = a monoacylglycerol + a fatty acid + H(+). In terms of biological role, secreted lipase that hydrolyzes acylglycerol lipids such as triacylglycerols and consequently releases free fatty acid. Generates free oleic acid from the substrates mono- and diolein and hydrolyzes triolein in significant amounts. Due to an absence of fatty acid synthase genes in Malassezia species, secretory lipases are essential for the yeast to generate free fatty acids from degradation of sebum and assimilate them as lipid sources for growth. Plays an essential role at the pathogen-host interface during disease progression. Performs also the reverse reaction to build diacyl- and triacyl- glycerols from monoacylglycerols. In Malassezia restricta (strain ATCC 96810 / NBRC 103918 / CBS 7877) (Seborrheic dermatitis infection agent), this protein is Secreted triacylglycerol lipase LIP3.